The chain runs to 342 residues: L-threonine 3-dehydrogenase (342 aa).

Cys38 is a binding site for Zn(2+). Active-site charge relay system residues include Thr40 and His43. The Zn(2+) site is built by His63, Glu64, Cys93, Cys96, Cys99, and Cys107. NAD(+)-binding positions include Ile175, Asp195, Arg200, 262-264 (LGI), and 286-287 (IY).

Belongs to the zinc-containing alcohol dehydrogenase family. In terms of assembly, homotetramer. Zn(2+) serves as cofactor.

Its subcellular location is the cytoplasm. It carries out the reaction L-threonine + NAD(+) = (2S)-2-amino-3-oxobutanoate + NADH + H(+). The protein operates within amino-acid degradation; L-threonine degradation via oxydo-reductase pathway; glycine from L-threonine: step 1/2. Catalyzes the NAD(+)-dependent oxidation of L-threonine to 2-amino-3-ketobutyrate. The sequence is that of L-threonine 3-dehydrogenase from Burkholderia multivorans (strain ATCC 17616 / 249).